We begin with the raw amino-acid sequence, 430 residues long: Enolase (430 aa).

A (2R)-2-phosphoglycerate-binding site is contributed by Gln162. The Proton donor role is filled by Glu204. Mg(2+) contacts are provided by Asp242, Glu289, and Asp316. Positions 341, 370, 371, and 392 each coordinate (2R)-2-phosphoglycerate. The active-site Proton acceptor is Lys341.

This sequence belongs to the enolase family. It depends on Mg(2+) as a cofactor.

Its subcellular location is the cytoplasm. The protein resides in the secreted. The protein localises to the cell surface. The catalysed reaction is (2R)-2-phosphoglycerate = phosphoenolpyruvate + H2O. It functions in the pathway carbohydrate degradation; glycolysis; pyruvate from D-glyceraldehyde 3-phosphate: step 4/5. Catalyzes the reversible conversion of 2-phosphoglycerate (2-PG) into phosphoenolpyruvate (PEP). It is essential for the degradation of carbohydrates via glycolysis. The chain is Enolase from Flavobacterium johnsoniae (strain ATCC 17061 / DSM 2064 / JCM 8514 / BCRC 14874 / CCUG 350202 / NBRC 14942 / NCIMB 11054 / UW101) (Cytophaga johnsonae).